We begin with the raw amino-acid sequence, 299 residues long: HTH-type transcriptional regulator CrgA (299 aa).

The HTH lysR-type domain occupies 1-60; that stretch reads MKTNSEELTVFVQVVESGSFSRAAEQLAMANSAVSRIVKRLEEKLGVNLLNRTTRQLSLT. The H-T-H motif DNA-binding region spans 20–39; that stretch reads FSRAAEQLAMANSAVSRIVK.

Belongs to the LysR transcriptional regulatory family. Forms oligomers. Oligomerization is required for DNA binding.

In terms of biological role, involved in the regulation of bacterial adhesion to host epithelial cells. May play a central regulatory role in meningococcal adhesion, particularly in switching from initial adhesion to intimate adhesion by downregulating the bacterial surface structures that hinder this adhesion. During intimate adhesion, negatively regulates the expression of pilC1, encoding a pilus-associated protein, pilE, encoding the pilin, and sia genes, encoding the capsule. Also negatively regulates its own expression. May also regulate other genes that are involved in intimate adhesion. Binds specifically to the promoter region of pilC1 and crgA (both harboring a CREN element), and pilE and sia (both devoid of a CREN element). Acts through interaction with RNA polymerase (RNAP). Interaction with RNAP leads to the production of short abortive transcripts, suggesting that CrgA may act by preventing RNAP from clearing the promoter. This Neisseria meningitidis serogroup C (strain 8013) protein is HTH-type transcriptional regulator CrgA.